The chain runs to 305 residues: Capsid protein (305 aa).

The tract at residues 30-49 (SMQRKSNRQRPKSRKTSGRV) is disordered. The segment covering 34 to 46 (KSNRQRPKSRKTS) has biased composition (basic residues).

Belongs to the icosahedral plant coat protein family.

Its subcellular location is the virion. In terms of biological role, capsid protein self-assembles to form an icosahedral capsid about 34 nm in diameter. The capsid encapsulates the genomic RNA (Potential). The protein is Capsid protein of Poinsettia latent virus (isolate Euphorbia pulcherrima/Germany/Siepen/2005) (PnLV).